Reading from the N-terminus, the 93-residue chain is Small ribosomal subunit protein uS15 (93 aa).

It belongs to the universal ribosomal protein uS15 family. Part of the 30S ribosomal subunit. Forms a bridge to the 50S subunit in the 70S ribosome, contacting the 23S rRNA.

Functionally, one of the primary rRNA binding proteins, it binds directly to 16S rRNA where it helps nucleate assembly of the platform of the 30S subunit by binding and bridging several RNA helices of the 16S rRNA. Its function is as follows. Forms an intersubunit bridge (bridge B4) with the 23S rRNA of the 50S subunit in the ribosome. The protein is Small ribosomal subunit protein uS15 of Anaplasma marginale (strain Florida).